The primary structure comprises 270 residues: ES1 protein, mitochondrial (270 aa).

Expressed specifically in the inner segments of cone photoreceptor cells of the retina (at protein level).

The protein localises to the mitochondrion. Plays a role in promoting mitochondrial enlargement in cone photoreceptor cells in a fusion-independent and ATP-dependent manner. The chain is ES1 protein, mitochondrial from Danio rerio (Zebrafish).